A 141-amino-acid chain; its full sequence is Cell division protein SepF (141 aa).

It belongs to the SepF family. In terms of assembly, homodimer. Interacts with FtsZ.

The protein resides in the cytoplasm. Its function is as follows. Cell division protein that is part of the divisome complex and is recruited early to the Z-ring. Probably stimulates Z-ring formation, perhaps through the cross-linking of FtsZ protofilaments. Its function overlaps with FtsA. The chain is Cell division protein SepF from Anoxybacillus flavithermus (strain DSM 21510 / WK1).